A 120-amino-acid chain; its full sequence is NAD(P)H-quinone oxidoreductase subunit 3, chloroplastic (120 aa).

The next 3 membrane-spanning stretches (helical) occupy residues 9 to 29, 64 to 84, and 88 to 108; these read IFWT…WISG, MFAL…PWAM, and VLGV…VVGL.

The protein belongs to the complex I subunit 3 family. In terms of assembly, NDH is composed of at least 16 different subunits, 5 of which are encoded in the nucleus.

The protein localises to the plastid. It is found in the chloroplast thylakoid membrane. It catalyses the reaction a plastoquinone + NADH + (n+1) H(+)(in) = a plastoquinol + NAD(+) + n H(+)(out). The enzyme catalyses a plastoquinone + NADPH + (n+1) H(+)(in) = a plastoquinol + NADP(+) + n H(+)(out). Functionally, NDH shuttles electrons from NAD(P)H:plastoquinone, via FMN and iron-sulfur (Fe-S) centers, to quinones in the photosynthetic chain and possibly in a chloroplast respiratory chain. The immediate electron acceptor for the enzyme in this species is believed to be plastoquinone. Couples the redox reaction to proton translocation, and thus conserves the redox energy in a proton gradient. This chain is NAD(P)H-quinone oxidoreductase subunit 3, chloroplastic, found in Lolium perenne (Perennial ryegrass).